We begin with the raw amino-acid sequence, 305 residues long: Alpha-N-acetylgalactosaminide alpha-2,6-sialyltransferase 3 (305 aa).

At 1–8 the chain is on the cytoplasmic side; that stretch reads MACILKRK. A helical; Signal-anchor for type II membrane protein membrane pass occupies residues 9 to 29; it reads PALAVSFIALCILLLAMRLAN. Residues 30-305 are Lumenal-facing; that stretch reads DVTFPLLLNC…VFTHPNWTVS (276 aa). Cysteine 80 and cysteine 229 are oxidised to a cystine. Asparagine 239 and asparagine 301 each carry an N-linked (GlcNAc...) asparagine glycan.

The protein belongs to the glycosyltransferase 29 family. In terms of tissue distribution, in adults it is highly expressed in spleen, followed by kidney and lesser in lung. Not found in liver and skeletal muscle. In newborns it is abundantly expressed in brain and kidney.

It is found in the golgi apparatus membrane. It catalyses the reaction an alpha-Neu5Ac-(2-&gt;3)-beta-D-Gal-(1-&gt;3)-D-GlcNAc derivative + CMP-N-acetyl-beta-neuraminate = an alpha-Neu5Ac-(2-&gt;3)-beta-D-Gal-(1-&gt;3)-[alpha-Neu5Ac-(2-&gt;6)]-D-GlcNAc derivative + CMP + H(+). The catalysed reaction is a ganglioside GM1b + CMP-N-acetyl-beta-neuraminate = a ganglioside GD1alpha + CMP + H(+). It carries out the reaction a ganglioside GM1b (d18:1(4E)) + CMP-N-acetyl-beta-neuraminate = a ganglioside GD1alpha (d18:1(4E)) + CMP + H(+). The enzyme catalyses a globoside MSGG + CMP-N-acetyl-beta-neuraminate = a globoside DSGG + CMP + H(+). It catalyses the reaction 3-O-[alpha-Neu5Ac-(2-&gt;3)-beta-D-Gal-(1-&gt;3)-alpha-D-GalNAc]-L-Ser-[protein] + CMP-N-acetyl-beta-neuraminate = a 3-O-{alpha-Neu5Ac-(2-&gt;3)-beta-D-Gal-(1-&gt;3)-[alpha-Neu5Ac-(2-&gt;6)]-alpha-D-GalNAc}-L-seryl-[protein] + CMP + H(+). The catalysed reaction is 3-O-[alpha-Neu5Ac-(2-&gt;3)-beta-D-Gal-(1-&gt;3)-alpha-D-GalNAc]-L-Thr-[protein] + CMP-N-acetyl-beta-neuraminate = a 3-O-{alpha-Neu5Ac-(2-&gt;3)-beta-D-Gal-(1-&gt;3)-[alpha-Neu5Ac-(2-&gt;6)]-alpha-D-GalNAc}-L-threonyl-[protein] + CMP + H(+). It functions in the pathway protein modification; protein glycosylation. The protein operates within glycolipid biosynthesis. Transfers the sialyl group (N-acetyl-alpha-neuraminyl or NeuAc) from CMP-NeuAc to the GalNAc residue on the NeuAc-alpha-2,3-Gal-beta-1,3-GalNAc sequence of glycoproteins and glycolipids forming an alpha-2,6-linkage. Produces branched type disialyl structures by transfer of a sialyl group onto a GalNAc residue inside the backbone core chains. ST6GalNAcIII prefers glycolipids to glycoproteins, predominantly catalyzing the biosynthesis of ganglioside GD1alpha from GM1b. GD1alpha is a critical molecule in the communication and interaction between neuronal cells and their supportive cells, particularly in brain tissues, and functions as an adhesion molecule in the process of metastasis. Sialylation of glycoproteins or glycosphingolipids is very important in tumor development, neuronal development, nerve repair, immunological processes and regulation of hormone sensitivity. In Rattus norvegicus (Rat), this protein is Alpha-N-acetylgalactosaminide alpha-2,6-sialyltransferase 3 (St6galnac3).